Consider the following 267-residue polypeptide: Small ribosomal subunit protein uS2 (267 aa).

Residues 247-267 are disordered; the sequence is LEDDILEDVEDEEEGDPEQGE.

It belongs to the universal ribosomal protein uS2 family.

The polypeptide is Small ribosomal subunit protein uS2 (Synechococcus sp. (strain JA-3-3Ab) (Cyanobacteria bacterium Yellowstone A-Prime)).